The sequence spans 449 residues: Probable phosphoglucosamine mutase (449 aa).

The active-site Phosphoserine intermediate is the S101. The Mg(2+) site is built by S101, D239, D241, and D243. S101 carries the post-translational modification Phosphoserine.

It belongs to the phosphohexose mutase family. It depends on Mg(2+) as a cofactor. Post-translationally, activated by phosphorylation.

The enzyme catalyses alpha-D-glucosamine 1-phosphate = D-glucosamine 6-phosphate. In terms of biological role, catalyzes the conversion of glucosamine-6-phosphate to glucosamine-1-phosphate. This chain is Probable phosphoglucosamine mutase, found in Methanothermobacter thermautotrophicus (strain ATCC 29096 / DSM 1053 / JCM 10044 / NBRC 100330 / Delta H) (Methanobacterium thermoautotrophicum).